The chain runs to 397 residues: ATP-dependent RNA helicase eIF4A (397 aa).

The Q motif motif lies at 23-51; that stretch reads YKFDDLNLKPNIVRGIFGYGYETPSAIQQ. One can recognise a Helicase ATP-binding domain in the interval 54 to 224; it reads ILPITEGRDV…TKFMNNPVRI (171 aa). 67–74 provides a ligand contact to ATP; it reads AQSGTGKT. Positions 172 to 175 match the DEAD box motif; the sequence is DEAD. In terms of domain architecture, Helicase C-terminal spans 235 to 396; sequence GIKQFYINVE…EMPADIGALF (162 aa).

Belongs to the DEAD box helicase family. eIF4A subfamily. As to quaternary structure, component of the eIF4F complex, which composition varies with external and internal environmental conditions. It is composed of at least eIF4A, eIF4E and eIF4G.

The protein resides in the cytoplasm. The catalysed reaction is ATP + H2O = ADP + phosphate + H(+). Functionally, ATP-dependent RNA helicase which is a subunit of the eIF4F complex involved in cap recognition and is required for mRNA binding to ribosome. In the current model of translation initiation, eIF4A unwinds RNA secondary structures in the 5'-UTR of mRNAs which is necessary to allow efficient binding of the small ribosomal subunit, and subsequent scanning for the initiator codon. The sequence is that of ATP-dependent RNA helicase eIF4A (TIF1) from Scheffersomyces stipitis (strain ATCC 58785 / CBS 6054 / NBRC 10063 / NRRL Y-11545) (Yeast).